The following is a 671-amino-acid chain: Putative ubiquitin thioesterase 232R (671 aa).

4 disordered regions span residues 36–62 (EIIDYQKNNPPRRSPSPRRSPSPRRIS), 100–123 (SPKIPSPVRQPSPVHSPVRSPVRQ), 171–203 (NQKPPRRSPSPRRSPSPRRSPSPRRSPSPRPVF), and 250–319 (EPIR…SKRS). The segment covering 110-123 (PSPVHSPVRSPVRQ) has biased composition (low complexity). The span at 182–200 (RRSPSPRRSPSPRRSPSPR) shows a compositional bias: pro residues. Low complexity predominate over residues 255–271 (SSSSRSSRSTRRSSSTK). Basic residues predominate over residues 272-319 (PSRRSSSRSRRSSSRSRRSSSRSRRSSSRSRRSSRRSTSRSRSLSKRS). One can recognise an OTU domain in the interval 392–521 (FRMINVPLDG…NFHYIALEPF (130 aa)). The active site involves D400. C403 acts as the Nucleophile in catalysis. Residue H514 is part of the active site. The tract at residues 589 to 625 (KRSLRPSIPPKISTEHRRTPKLRPSVPRPSSIRQSQP) is disordered.

It carries out the reaction Thiol-dependent hydrolysis of ester, thioester, amide, peptide and isopeptide bonds formed by the C-terminal Gly of ubiquitin (a 76-residue protein attached to proteins as an intracellular targeting signal).. Functionally, hydrolase that can remove conjugated ubiquitin from proteins and may therefore play an important regulatory role at the level of protein turnover by preventing degradation. The chain is Putative ubiquitin thioesterase 232R from Acheta domesticus (House cricket).